A 129-amino-acid chain; its full sequence is Glycine cleavage system H protein (129 aa).

The region spanning 24–106 (LLKIGVSEFA…IGDGWLVILK (83 aa)) is the Lipoyl-binding domain. An N6-lipoyllysine modification is found at Lys65.

The protein belongs to the GcvH family. As to quaternary structure, the glycine cleavage system is composed of four proteins: P, T, L and H. The cofactor is (R)-lipoate.

Functionally, the glycine cleavage system catalyzes the degradation of glycine. The H protein shuttles the methylamine group of glycine from the P protein to the T protein. In Prochlorococcus marinus (strain MIT 9301), this protein is Glycine cleavage system H protein.